Reading from the N-terminus, the 370-residue chain is Dual-specificity RNA methyltransferase RlmN (370 aa).

The Proton acceptor role is filled by glutamate 93. Positions 99–337 (EEGRGTLCVS…VTTVRKTRGD (239 aa)) constitute a Radical SAM core domain. A disulfide bridge connects residues cysteine 106 and cysteine 343. Cysteine 113, cysteine 117, and cysteine 120 together coordinate [4Fe-4S] cluster. S-adenosyl-L-methionine contacts are provided by residues 167-168 (GE), serine 199, 221-223 (SLH), and asparagine 300. Cysteine 343 acts as the S-methylcysteine intermediate in catalysis.

Belongs to the radical SAM superfamily. RlmN family. It depends on [4Fe-4S] cluster as a cofactor.

It localises to the cytoplasm. It catalyses the reaction adenosine(2503) in 23S rRNA + 2 reduced [2Fe-2S]-[ferredoxin] + 2 S-adenosyl-L-methionine = 2-methyladenosine(2503) in 23S rRNA + 5'-deoxyadenosine + L-methionine + 2 oxidized [2Fe-2S]-[ferredoxin] + S-adenosyl-L-homocysteine. The enzyme catalyses adenosine(37) in tRNA + 2 reduced [2Fe-2S]-[ferredoxin] + 2 S-adenosyl-L-methionine = 2-methyladenosine(37) in tRNA + 5'-deoxyadenosine + L-methionine + 2 oxidized [2Fe-2S]-[ferredoxin] + S-adenosyl-L-homocysteine. Specifically methylates position 2 of adenine 2503 in 23S rRNA and position 2 of adenine 37 in tRNAs. m2A2503 modification seems to play a crucial role in the proofreading step occurring at the peptidyl transferase center and thus would serve to optimize ribosomal fidelity. The protein is Dual-specificity RNA methyltransferase RlmN of Francisella philomiragia subsp. philomiragia (strain ATCC 25017 / CCUG 19701 / FSC 153 / O#319-036).